The chain runs to 273 residues: NADPH-dependent 7-cyano-7-deazaguanine reductase (273 aa).

80–82 (VES) contributes to the substrate binding site. Residue 82–83 (SK) participates in NADPH binding. Cysteine 180 functions as the Thioimide intermediate in the catalytic mechanism. The active-site Proton donor is the aspartate 187. 219-220 (HE) lines the substrate pocket. 248 to 249 (RG) provides a ligand contact to NADPH.

This sequence belongs to the GTP cyclohydrolase I family. QueF type 2 subfamily. In terms of assembly, homodimer.

It localises to the cytoplasm. The catalysed reaction is 7-aminomethyl-7-carbaguanine + 2 NADP(+) = 7-cyano-7-deazaguanine + 2 NADPH + 3 H(+). It functions in the pathway tRNA modification; tRNA-queuosine biosynthesis. Functionally, catalyzes the NADPH-dependent reduction of 7-cyano-7-deazaguanine (preQ0) to 7-aminomethyl-7-deazaguanine (preQ1). The sequence is that of NADPH-dependent 7-cyano-7-deazaguanine reductase from Bordetella bronchiseptica (strain ATCC BAA-588 / NCTC 13252 / RB50) (Alcaligenes bronchisepticus).